The primary structure comprises 609 residues: Dynamin-like protein 2 (609 aa).

An inserts into assembly domain of DLP1, required for tetramerization region spans residues 1 to 16 (MQINLLNDFIKAYENT). Positions 17-25 (YSVSFDDSF) are linker. The 248-residue stretch at 63-310 (NIAIIGQFSS…FVGIFDRLLN (248 aa)) folds into the Dynamin-type G domain. Residues 68 to 75 (GQFSSGKS) are G1 motif. GDP is bound at residue 72-76 (SGKSS). Positions 93–95 (PVT) are G2 motif. The interval 158 to 161 (DTPG) is G3 motif. The tract at residues 216-219 (NQKD) is G4 motif.

The protein belongs to the TRAFAC class dynamin-like GTPase superfamily. Dynamin/Fzo/YdjA family. As to quaternary structure, forms a 2:2 heterotetramer with DLP1. DLP2 forms a central back-to-back dimer flanked on each side by a DLP1 subunit. In the crystal structures the 2 DLP1 subunits are in very different conformations.

The protein resides in the cytoplasm. The protein localises to the cytosol. The catalysed reaction is GTP + H2O = GDP + phosphate + H(+). In terms of biological role, the heterotetrameric DLP1(2)-DLP2(2) complex tethers liposomes and may mediate their fusion. Initial binding is probably mediated by DLP1, while DLP2 couples DLP1 subunits and increases the effective reach of the complex up to 45 nm. The role of the nucleotide is unknown. This subunit alone very weakly binds to liposomes; GTP, GDP, GMPPCP and GMPPNP do not change heterotetramer binding. Tetramerization is required for GTPase activity, suggesting the GTPase domains (dynamin-type G) from DLP1 and DLP2 must dimerize to reconstitute the GTPase active site. This chain is Dynamin-like protein 2, found in Campylobacter jejuni subsp. jejuni serotype O:23/36 (strain 81-176).